We begin with the raw amino-acid sequence, 713 residues long: KNR4/SMI1 homolog (713 aa).

Disordered stretches follow at residues 18-129 (PDRY…VTRD), 255-274 (IFIN…SPVA), 400-457 (RHQM…SKPA), and 500-713 (EPLE…KGKK). Residues 22-34 (ASQQRSSKASQSA) show a composition bias toward low complexity. Positions 35 to 65 (GANSQNRPLYNNDDNQSEMYQASSSYTGGYT) are enriched in polar residues. Composition is skewed to low complexity over residues 66–81 (NSPS…GAAA) and 88–103 (SSRN…SSTS). The span at 260 to 270 (NAGSPNSSTPG) shows a compositional bias: polar residues. Over residues 400-412 (RHQMQRREHERRQ) the composition is skewed to basic and acidic residues. Residues 413–429 (AAAAAQQQQQQQQHHAQ) show a composition bias toward low complexity. Basic and acidic residues-rich tracts occupy residues 507 to 605 (EIKG…EEQK) and 613 to 662 (AKAE…KIDE). Residues 663-686 (ENGNAEEADEEADDDDEDDEEEGD) are compositionally biased toward acidic residues. Residues 701 to 713 (SKSKKKNKKKGKK) show a composition bias toward basic residues.

The protein belongs to the KNR4/SMI1 family.

The protein is KNR4/SMI1 homolog of Yarrowia lipolytica (strain CLIB 122 / E 150) (Yeast).